A 495-amino-acid polypeptide reads, in one-letter code: ATP synthase subunit beta, chloroplastic (495 aa).

172 to 179 (GGAGVGKT) is a binding site for ATP.

The protein belongs to the ATPase alpha/beta chains family. In terms of assembly, F-type ATPases have 2 components, CF(1) - the catalytic core - and CF(0) - the membrane proton channel. CF(1) has five subunits: alpha(3), beta(3), gamma(1), delta(1), epsilon(1). CF(0) has four main subunits: a(1), b(1), b'(1) and c(9-12).

The protein localises to the plastid. It is found in the chloroplast thylakoid membrane. The enzyme catalyses ATP + H2O + 4 H(+)(in) = ADP + phosphate + 5 H(+)(out). Produces ATP from ADP in the presence of a proton gradient across the membrane. The catalytic sites are hosted primarily by the beta subunits. The protein is ATP synthase subunit beta, chloroplastic of Hyacinthus orientalis (Common hyacinth).